The primary structure comprises 202 residues: Recombination protein RecR (202 aa).

A C4-type zinc finger spans residues 56-71 (CRVCGNLDSADPCSVC). The Toprim domain occupies 79-179 (GLICVVESVG…SVTRLAQGIP (101 aa)).

Belongs to the RecR family.

In terms of biological role, may play a role in DNA repair. It seems to be involved in an RecBC-independent recombinational process of DNA repair. It may act with RecF and RecO. This Granulibacter bethesdensis (strain ATCC BAA-1260 / CGDNIH1) protein is Recombination protein RecR.